We begin with the raw amino-acid sequence, 862 residues long: Switch 2 (862 aa).

Disordered regions lie at residues 13 to 43 and 58 to 95; these read PCGSFPSSSSLRVSSTQELEPSRKPPKSSLS and KHESKISKTQVEDFDHNEDDHKRNIKFDEEEVDEDDER. The segment covering 16-27 has biased composition (low complexity); that stretch reads SFPSSSSLRVSS. The segment covering 58-84 has biased composition (basic and acidic residues); sequence KHESKISKTQVEDFDHNEDDHKRNIKF. Acidic residues predominate over residues 85-95; the sequence is DEEEVDEDDER. In terms of domain architecture, Helicase ATP-binding spans 151–323; sequence YNLYKNNHGG…FNLFEWVAPG (173 aa). An ATP-binding site is contributed by 164–171; sequence DDMGLGKT. The short motif at 274-277 is the DEAH box element; it reads DEAH. Residues 274–294 are a coiled coil; the sequence is DEAHRLKNEKSKLYEACLEIK. In terms of domain architecture, Helicase C-terminal spans 532-685; the sequence is ALEKLMASWI…VAGKMETRYF (154 aa). A compositionally biased stretch (polar residues) spans 782–793; the sequence is TTSTSQRLNGDG. The segment at 782–821 is disordered; it reads TTSTSQRLNGDGNSADRKKKKRKGCSEEEDMSSSNREQKR.

Belongs to the SNF2/RAD54 helicase family.

In terms of biological role, may be involved in early DNA damage response. Probable chromatin remodeling factor. This chain is Switch 2, found in Arabidopsis thaliana (Mouse-ear cress).